The chain runs to 189 residues: Elongation factor P (189 aa).

This sequence belongs to the elongation factor P family.

The protein resides in the cytoplasm. It participates in protein biosynthesis; polypeptide chain elongation. Involved in peptide bond synthesis. Stimulates efficient translation and peptide-bond synthesis on native or reconstituted 70S ribosomes in vitro. Probably functions indirectly by altering the affinity of the ribosome for aminoacyl-tRNA, thus increasing their reactivity as acceptors for peptidyl transferase. In Ehrlichia canis (strain Jake), this protein is Elongation factor P.